The primary structure comprises 33 residues: uncharacterized protein (33 aa).

This is an uncharacterized protein from Saccharomyces cerevisiae (strain ATCC 204508 / S288c) (Baker's yeast).